Reading from the N-terminus, the 485-residue chain is NADH-quinone oxidoreductase subunit N (485 aa).

14 consecutive transmembrane segments (helical) span residues 8–28 (LIAL…MLSI), 35–55 (FLNA…LWFV), 71–91 (GFAM…CTFA), 105–125 (FYLL…ANHL), 127–147 (TLFL…GYAF), 159–179 (YTIL…LVYA), 203–223 (LLAG…LVPF), 235–255 (PAPV…GVVM), 271–291 (VVLG…ALSQ), 297–317 (LLGY…IALQ), 326–346 (VGVY…VVSL), 373–393 (AAVM…LGFI), 408–430 (WWLV…RVAV), and 455–475 (IVVL…QPLI).

Belongs to the complex I subunit 2 family. As to quaternary structure, NDH-1 is composed of 13 different subunits. Subunits NuoA, H, J, K, L, M, N constitute the membrane sector of the complex.

The protein resides in the cell inner membrane. The catalysed reaction is a quinone + NADH + 5 H(+)(in) = a quinol + NAD(+) + 4 H(+)(out). Functionally, NDH-1 shuttles electrons from NADH, via FMN and iron-sulfur (Fe-S) centers, to quinones in the respiratory chain. The immediate electron acceptor for the enzyme in this species is believed to be ubiquinone. Couples the redox reaction to proton translocation (for every two electrons transferred, four hydrogen ions are translocated across the cytoplasmic membrane), and thus conserves the redox energy in a proton gradient. The chain is NADH-quinone oxidoreductase subunit N from Salmonella paratyphi A (strain ATCC 9150 / SARB42).